Here is a 393-residue protein sequence, read N- to C-terminus: Putative competence-damage inducible protein (393 aa).

Belongs to the CinA family.

The protein is Putative competence-damage inducible protein of Streptococcus suis (strain 05ZYH33).